The following is a 239-amino-acid chain: Dephospho-CoA kinase (239 aa).

A DPCK domain is found at 3-206 (IIGLTGSIAS…GGEGGEPAAG (204 aa)). An ATP-binding site is contributed by 11 to 16 (ASGKST). The disordered stretch occupies residues 197-239 (GGEGGEPAAGSSAHHGAGSVDPGAGPCDGPGAAPEAERRGGDR). Low complexity predominate over residues 204 to 230 (AAGSSAHHGAGSVDPGAGPCDGPGAAP).

This sequence belongs to the CoaE family.

The protein resides in the cytoplasm. It carries out the reaction 3'-dephospho-CoA + ATP = ADP + CoA + H(+). The protein operates within cofactor biosynthesis; coenzyme A biosynthesis; CoA from (R)-pantothenate: step 5/5. In terms of biological role, catalyzes the phosphorylation of the 3'-hydroxyl group of dephosphocoenzyme A to form coenzyme A. This chain is Dephospho-CoA kinase, found in Symbiobacterium thermophilum (strain DSM 24528 / JCM 14929 / IAM 14863 / T).